A 156-amino-acid polypeptide reads, in one-letter code: Putative pre-16S rRNA nuclease (156 aa).

The protein belongs to the YqgF nuclease family.

It is found in the cytoplasm. Could be a nuclease involved in processing of the 5'-end of pre-16S rRNA. The polypeptide is Putative pre-16S rRNA nuclease (Streptomyces avermitilis (strain ATCC 31267 / DSM 46492 / JCM 5070 / NBRC 14893 / NCIMB 12804 / NRRL 8165 / MA-4680)).